Here is a 185-residue protein sequence, read N- to C-terminus: MGRYSKEPRNPTKSCKARGSNLRVHFKNTRETAKTISKMPLRRAIKFLKNVKDQLECVPFRRYNGGVGRCAQAKQWGTTQGRWPRKSADFLLQLLKNAESNADYRGLDTDRLVIEHIQVNRAPRLRRRTYRAHGRINPYMSSPCHIEVILSERERVVAKPREDEPHKKKISKKKLARAKEKMLRE.

The interval 158 to 185 is disordered; the sequence is AKPREDEPHKKKISKKKLARAKEKMLRE. A compositionally biased stretch (basic residues) spans 167–176; it reads KKKISKKKLA.

The protein belongs to the universal ribosomal protein uL22 family.

This Diaphorina citri (Asian citrus psyllid) protein is Large ribosomal subunit protein uL22 (RpL17).